We begin with the raw amino-acid sequence, 143 residues long: Host transcription reprogramming factor 8 (143 aa).

The first 19 residues, 1-19 (MHTYKFIQIALLFASVALA), serve as a signal peptide directing secretion. Residues 24-34 (PSPPNPPPVPQ) show a composition bias toward pro residues. The segment at 24 to 43 (PSPPNPPPVPQLPNSETKSN) is disordered. The C2H2-type 1 zinc-finger motif lies at 48–71 (HSCEFCGVVKPSGPAYLEHYHQNH). Residues 77–99 (GKLATPSPPNPPPVPTQKVETHA) are disordered. A compositionally biased stretch (pro residues) spans 82-91 (PSPPNPPPVP). A C2H2-type 2 zinc finger spans residues 103–126 (HGCEWCNKVEPSGPAYIKHYKENH).

It localises to the secreted. It is found in the host nucleus. Probable secreted effector that translocates into the nuclei of host cells to reprogram the expression of targeted genes by binding on effector binding elements in rice. This is Host transcription reprogramming factor 8 from Pyricularia oryzae (strain 70-15 / ATCC MYA-4617 / FGSC 8958) (Rice blast fungus).